We begin with the raw amino-acid sequence, 412 residues long: Isocitrate dehydrogenase [NADP] cytoplasmic (412 aa).

Residues 75-77 (TIT) and Arg-82 contribute to the NADP(+) site. Thr-77 is a substrate binding site. Substrate-binding positions include 94–100 (SPNGTIR), Arg-109, and Arg-132. Mn(2+) is bound at residue Asp-252. Lys-260 serves as a coordination point for NADP(+). Asp-275 serves as a coordination point for Mn(2+). NADP(+)-binding positions include 310–315 (GTVTRH) and Asn-328.

Belongs to the isocitrate and isopropylmalate dehydrogenases family. In terms of assembly, homodimer. The cofactor is Mg(2+). It depends on Mn(2+) as a cofactor. The N-terminus is blocked.

The protein resides in the cytoplasm. The enzyme catalyses D-threo-isocitrate + NADP(+) = 2-oxoglutarate + CO2 + NADPH. With respect to regulation, by catabolite repression. May function in the production of NADPH for fatty acid and sterol synthesis. In Saccharomyces cerevisiae (strain ATCC 204508 / S288c) (Baker's yeast), this protein is Isocitrate dehydrogenase [NADP] cytoplasmic (IDP2).